The following is a 226-amino-acid chain: ATP synthase subunit a (226 aa).

The next 5 helical transmembrane spans lie at 20–40 (LNWF…WLMP), 74–94 (FVSL…PYIF), 100–120 (LTLT…YGWI), 162–182 (LTAN…TGPM), and 187–207 (IILS…SAVA).

The protein belongs to the ATPase A chain family. In terms of assembly, F-type ATPases have 2 components, CF(1) - the catalytic core - and CF(0) - the membrane proton channel. CF(1) has five subunits: alpha(3), beta(3), gamma(1), delta(1), epsilon(1). CF(0) has three main subunits: a, b and c.

The protein localises to the mitochondrion inner membrane. In terms of biological role, mitochondrial membrane ATP synthase (F(1)F(0) ATP synthase or Complex V) produces ATP from ADP in the presence of a proton gradient across the membrane which is generated by electron transport complexes of the respiratory chain. F-type ATPases consist of two structural domains, F(1) - containing the extramembraneous catalytic core and F(0) - containing the membrane proton channel, linked together by a central stalk and a peripheral stalk. During catalysis, ATP synthesis in the catalytic domain of F(1) is coupled via a rotary mechanism of the central stalk subunits to proton translocation. Key component of the proton channel; it may play a direct role in the translocation of protons across the membrane. This chain is ATP synthase subunit a (mt:ATPase6), found in Aedes albopictus (Asian tiger mosquito).